The primary structure comprises 360 residues: Probable mannan endo-1,4-beta-mannosidase A (360 aa).

A signal peptide spans 1-18; it reads MKLSQILTFASLLSGALA. The substrate site is built by Asn142 and Asn178. Glu179 (proton donor) is an active-site residue. A substrate-binding site is contributed by Tyr254. Catalysis depends on Glu287, which acts as the Nucleophile. A glycan (N-linked (GlcNAc...) asparagine) is linked at Asn307. Trp317 contacts substrate.

The protein belongs to the glycosyl hydrolase 5 (cellulase A) family.

It localises to the secreted. The enzyme catalyses Random hydrolysis of (1-&gt;4)-beta-D-mannosidic linkages in mannans, galactomannans and glucomannans.. In terms of biological role, endo-1,4-mannanase, a crucial enzyme for depolymerization of seed galactomannans and wood galactoglucomannans. The chain is Probable mannan endo-1,4-beta-mannosidase A (manA) from Aspergillus clavatus (strain ATCC 1007 / CBS 513.65 / DSM 816 / NCTC 3887 / NRRL 1 / QM 1276 / 107).